The chain runs to 115 residues: OV39 antigen (115 aa).

This Onchocerca volvulus protein is OV39 antigen (OV39).